The following is a 463-amino-acid chain: 3-isopropylmalate dehydratase large subunit (463 aa).

Cys-347, Cys-407, and Cys-410 together coordinate [4Fe-4S] cluster.

It belongs to the aconitase/IPM isomerase family. LeuC type 1 subfamily. Heterodimer of LeuC and LeuD. It depends on [4Fe-4S] cluster as a cofactor.

The enzyme catalyses (2R,3S)-3-isopropylmalate = (2S)-2-isopropylmalate. The protein operates within amino-acid biosynthesis; L-leucine biosynthesis; L-leucine from 3-methyl-2-oxobutanoate: step 2/4. Its function is as follows. Catalyzes the isomerization between 2-isopropylmalate and 3-isopropylmalate, via the formation of 2-isopropylmaleate. This chain is 3-isopropylmalate dehydratase large subunit, found in Buchnera aphidicola subsp. Cinara cedri (strain Cc).